The chain runs to 131 residues: D-ribose pyranase (131 aa).

Catalysis depends on His-20, which acts as the Proton donor. Substrate contacts are provided by residues Asp-28, His-98, and 120-122 (YCN).

This sequence belongs to the RbsD / FucU family. RbsD subfamily. Homodecamer.

Its subcellular location is the cytoplasm. It carries out the reaction beta-D-ribopyranose = beta-D-ribofuranose. Its pathway is carbohydrate metabolism; D-ribose degradation; D-ribose 5-phosphate from beta-D-ribopyranose: step 1/2. Functionally, catalyzes the interconversion of beta-pyran and beta-furan forms of D-ribose. In Coprothermobacter proteolyticus (strain ATCC 35245 / DSM 5265 / OCM 4 / BT), this protein is D-ribose pyranase.